We begin with the raw amino-acid sequence, 174 residues long: Nucleoside-triphosphatase THEP1 (174 aa).

ATP is bound by residues 8–15 (GIPGIGKS) and 99–106 (LIVIDEVG).

Belongs to the THEP1 NTPase family.

The catalysed reaction is a ribonucleoside 5'-triphosphate + H2O = a ribonucleoside 5'-diphosphate + phosphate + H(+). In terms of biological role, has nucleotide phosphatase activity towards ATP, GTP, CTP, TTP and UTP. May hydrolyze nucleoside diphosphates with lower efficiency. The sequence is that of Nucleoside-triphosphatase THEP1 from Methanosarcina barkeri (strain Fusaro / DSM 804).